A 956-amino-acid chain; its full sequence is Translation initiation factor IF-2 (956 aa).

3 disordered regions span residues 53–102 (QFAG…QQEI), 116–315 (GKID…NRPA), and 334–371 (TLEK…ALDE). Over residues 58-102 (KGNKEASKEVGEEKRKEKEALRVEREKEIEDKRRQEEERQKQQEI) the composition is skewed to basic and acidic residues. Positions 142–158 (VTPTQTEKPVQKETVQS) are enriched in polar residues. Residues 166-186 (SEEKKVEKPIITEKKEVKAES) show a composition bias toward basic and acidic residues. Residues 197–208 (TDPTTAEETITT) are compositionally biased toward low complexity. Polar residues predominate over residues 209–229 (QYQKLSGTTLTGQTIDLSQFN). Over residues 240–257 (ITPNKPGTPGVGNNNNAN) the composition is skewed to low complexity. Residues 343 to 352 (GKSKAAKYRR) are compositionally biased toward basic residues. A compositionally biased stretch (basic and acidic residues) spans 353-371 (DKRETHRQKSDDEQRALDE). A tr-type G domain is found at 454 to 622 (TRAPIVTVMG…KVLLEAEILD (169 aa)). The tract at residues 463 to 470 (GHVDHGKT) is G1. Residue 463–470 (GHVDHGKT) coordinates GTP. Residues 488–492 (GITQH) are G2. The interval 510 to 513 (DTPG) is G3. GTP contacts are provided by residues 510–514 (DTPGH) and 564–567 (NKVD). Residues 564 to 567 (NKVD) are G4. The interval 600–602 (SAK) is G5.

This sequence belongs to the TRAFAC class translation factor GTPase superfamily. Classic translation factor GTPase family. IF-2 subfamily.

The protein resides in the cytoplasm. Its function is as follows. One of the essential components for the initiation of protein synthesis. Protects formylmethionyl-tRNA from spontaneous hydrolysis and promotes its binding to the 30S ribosomal subunits. Also involved in the hydrolysis of GTP during the formation of the 70S ribosomal complex. The sequence is that of Translation initiation factor IF-2 from Flavobacterium johnsoniae (strain ATCC 17061 / DSM 2064 / JCM 8514 / BCRC 14874 / CCUG 350202 / NBRC 14942 / NCIMB 11054 / UW101) (Cytophaga johnsonae).